The primary structure comprises 212 residues: Prolactin-3C1 (212 aa).

An N-terminal signal peptide occupies residues 1–29 (MQLSLTQARTWKGLFLLVSCMFLWVYVTA). The cysteines at positions 80 and 188 are disulfide-linked. An N-linked (GlcNAc...) asparagine glycan is attached at Asn-100.

This sequence belongs to the somatotropin/prolactin family. As to expression, expressed exclusively in decidua.

Its subcellular location is the secreted. This Mus musculus (Mouse) protein is Prolactin-3C1 (Prl3c1).